Here is a 448-residue protein sequence, read N- to C-terminus: Noelin-2 (448 aa).

The N-terminal stretch at 1-14 is a signal peptide; that stretch reads MRKLRQTGTTIAGG. 2 coiled-coil regions span residues 52-79 and 130-187; these read RDGR…LELR and LEQY…AQKL. N-linked (GlcNAc...) asparagine glycans are attached at residues Asn-68, Asn-149, Asn-269, Asn-304, Asn-393, and Asn-435. Positions 188 to 440 constitute an Olfactomedin-like domain; that stretch reads GCGKLTGVSN…QVLYNVTLFH (253 aa). Cys-189 and Cys-371 are joined by a disulfide.

In terms of assembly, peripherally associated with AMPAR complex. AMPAR complex consists of an inner core made of 4 pore-forming GluA/GRIA proteins (GRIA1, GRIA2, GRIA3 and GRIA4) and 4 major auxiliary subunits arranged in a twofold symmetry. One of the two pairs of distinct binding sites is occupied either by CNIH2, CNIH3 or CACNG2, CACNG3. The other harbors CACNG2, CACNG3, CACNG4, CACNG8 or GSG1L. This inner core of AMPAR complex is complemented by outer core constituents binding directly to the GluA/GRIA proteins at sites distinct from the interaction sites of the inner core constituents. Outer core constituents include at least PRRT1, PRRT2, CKAMP44/SHISA9, FRRS1L and NRN1. The proteins of the inner and outer core serve as a platform for other, more peripherally associated AMPAR constituents, including OLFM2. Alone or in combination, these auxiliary subunits control the gating and pharmacology of the AMPAR complex and profoundly impact their biogenesis and protein processing. Interacts with GRIA2. Interacts with OLFM1 and OLFM3. Interacts with SRF; the interaction promotes dissociation of SRF from the transcriptional repressor HEY2. Interacts with RUNX2. Expressed in the brain (at protein level). In the developing eye, first detected at 12 dpc in the retinal pigmented epithelium and preferentially expressed in differentiating retinal ganglion cells between 15 and 18 dpc. In the brain, expression is detected mainly in the olfactory bulb, cortex, piriform cortex, olfactory trabeculae, and inferior and superior colliculus. In the adult eye, expression is detected mainly in retinal ganglion cells. Expressed in carotid arteries.

The protein localises to the secreted. The protein resides in the synapse. It is found in the membrane. Its subcellular location is the nucleus. It localises to the cytoplasm. In terms of biological role, involved in transforming growth factor beta (TGF-beta)-induced smooth muscle differentiation. TGF-beta induces expression and nuclear translocation of OLFM2 where it binds to SRF, causing its dissociation from the transcriptional repressor HEY2/HERP1 and facilitating binding of SRF to target genes. Plays a role in AMPAR complex organization. Is a regulator of vascular smooth-muscle cell (SMC) phenotypic switching, that acts by promoting RUNX2 and inhibiting MYOCD binding to SRF. SMC phenotypic switching is the process through which vascular SMCs undergo transition between a quiescent contractile phenotype and a proliferative synthetic phenotype in response to pathological stimuli. SMC phenotypic plasticity is essential for vascular development and remodeling. This Mus musculus (Mouse) protein is Noelin-2 (Olfm2).